The sequence spans 926 residues: Nitrate reductase [NADH] (926 aa).

The tract at residues 1–85 (MAASVDRQYH…SDSEEDDDEN (85 aa)) is disordered. Residues 36–46 (YTFSNPPSSNG) show a composition bias toward polar residues. Residues 58–73 (DNNSNSNNGSNNNNNR) show a composition bias toward low complexity. C204 provides a ligand contact to Mo-molybdopterin. The region spanning 551 to 626 (SKMYSMSEVK…LEDFRIGELI (76 aa)) is the Cytochrome b5 heme-binding domain. H586 and H609 together coordinate heme. Positions 670–782 (RVKIPCKLIE…KGPLGHIEYL (113 aa)) constitute an FAD-binding FR-type domain. FAD contacts are provided by residues 722–725 (RAYT), 739–743 (VVKVY), F744, F751, 756–758 (VMS), and T809.

It belongs to the nitrate reductase family. In terms of assembly, homodimer. Requires FAD as cofactor. Heme is required as a cofactor. Mo-molybdopterin serves as cofactor.

It carries out the reaction nitrite + NAD(+) + H2O = nitrate + NADH + H(+). Nitrate reductase is a key enzyme involved in the first step of nitrate assimilation in plants, fungi and bacteria. This Spinacia oleracea (Spinach) protein is Nitrate reductase [NADH] (NIA).